The sequence spans 319 residues: Methionyl-tRNA formyltransferase (319 aa).

Position 115-118 (115-118 (SLLP)) interacts with (6S)-5,6,7,8-tetrahydrofolate.

This sequence belongs to the Fmt family.

The catalysed reaction is L-methionyl-tRNA(fMet) + (6R)-10-formyltetrahydrofolate = N-formyl-L-methionyl-tRNA(fMet) + (6S)-5,6,7,8-tetrahydrofolate + H(+). Functionally, attaches a formyl group to the free amino group of methionyl-tRNA(fMet). The formyl group appears to play a dual role in the initiator identity of N-formylmethionyl-tRNA by promoting its recognition by IF2 and preventing the misappropriation of this tRNA by the elongation apparatus. This chain is Methionyl-tRNA formyltransferase, found in Lactococcus lactis subsp. lactis (strain IL1403) (Streptococcus lactis).